A 227-amino-acid polypeptide reads, in one-letter code: Cytidylate kinase (227 aa).

12–20 (GPSGAGKGT) lines the ATP pocket.

It belongs to the cytidylate kinase family. Type 1 subfamily.

Its subcellular location is the cytoplasm. The catalysed reaction is CMP + ATP = CDP + ADP. The enzyme catalyses dCMP + ATP = dCDP + ADP. The sequence is that of Cytidylate kinase from Xanthomonas oryzae pv. oryzae (strain PXO99A).